The following is a 30-amino-acid chain: SVDFDSESPRKPXIQNEIVDLHNPLRRXVN.

A disordered region spans residues 1–30 (SVDFDSESPRKPXIQNEIVDLHNPLRRXVN).

The protein belongs to the CRISP family. Post-translationally, contains 8 disulfide bonds. As to expression, expressed by the venom gland.

Its subcellular location is the secreted. Functionally, inhibits calcium-activated potassium channels (KCa), voltage-gated potassium channel (Kv), and the calcium release channel/ryanodine receptor (RyR). The polypeptide is Cysteine-rich venom protein okinavin (Ovophis okinavensis (Ryukyu Island pit viper)).